A 259-amino-acid polypeptide reads, in one-letter code: Hydroxyethylthiazole kinase (259 aa).

Met-50 serves as a coordination point for substrate. ATP is bound by residues Arg-122 and Thr-168. Gly-195 is a binding site for substrate.

It belongs to the Thz kinase family. Mg(2+) is required as a cofactor.

The enzyme catalyses 5-(2-hydroxyethyl)-4-methylthiazole + ATP = 4-methyl-5-(2-phosphooxyethyl)-thiazole + ADP + H(+). It functions in the pathway cofactor biosynthesis; thiamine diphosphate biosynthesis; 4-methyl-5-(2-phosphoethyl)-thiazole from 5-(2-hydroxyethyl)-4-methylthiazole: step 1/1. Catalyzes the phosphorylation of the hydroxyl group of 4-methyl-5-beta-hydroxyethylthiazole (THZ). The polypeptide is Hydroxyethylthiazole kinase (Escherichia coli O127:H6 (strain E2348/69 / EPEC)).